The following is a 294-amino-acid chain: Probable HTH-type transcriptional regulator LrrA (294 aa).

The HTH lysR-type domain maps to 1-58; it reads MNITQLQILAAVVETGNFSAAALQLDLSQSAVSRAIAALEDELGVVLLSRGRFGARPT. Positions 18–37 form a DNA-binding region, H-T-H motif; the sequence is FSAAALQLDLSQSAVSRAIA.

This sequence belongs to the LysR transcriptional regulatory family.

In Synechococcus elongatus (strain ATCC 33912 / PCC 7942 / FACHB-805) (Anacystis nidulans R2), this protein is Probable HTH-type transcriptional regulator LrrA (lrrA).